Consider the following 460-residue polypeptide: Interleukin-1 receptor-associated kinase 4 (460 aa).

An N-acetylmethionine modification is found at M1. In terms of domain architecture, Death spans 20–104 (RKLSDFIDPQ…APASLLLPDA (85 aa)). K34 is subject to N6-acetyllysine. Residues 186–454 (SVGGNKMGEG…PDIKKVQQLL (269 aa)) enclose the Protein kinase domain. ATP-binding positions include 192-200 (MGEGGFGVV) and K213. The active-site Proton acceptor is the D311. ATP-binding positions include 313 to 316 (KSAN) and D329. A phosphothreonine mark is found at T342 and T345. S346 is subject to Phosphoserine.

Belongs to the protein kinase superfamily. TKL Ser/Thr protein kinase family. Pelle subfamily. Associates with MYD88 and IRAK2 to form a ternary complex called the Myddosome. Once phosphorylated, IRAK4 dissociates from the receptor complex and then associates with the TNF receptor-associated factor 6 (TRAF6), IRAK1, and PELI1; this intermediate complex is required for subsequent NF-kappa-B activation. Direct binding of SMAD6 to PELI1 prevents complex formation and hence negatively regulates IL1R-TLR signaling and eventually NF-kappa-B-mediated gene expression. Interacts with IL1RL1. Interacts (when phosphorylated) with IRAK1. May interact (when phosphorylated) with IRAK3. Requires Mg(2+) as cofactor. In terms of processing, phosphorylated.

The protein localises to the cytoplasm. It catalyses the reaction L-seryl-[protein] + ATP = O-phospho-L-seryl-[protein] + ADP + H(+). The catalysed reaction is L-threonyl-[protein] + ATP = O-phospho-L-threonyl-[protein] + ADP + H(+). In terms of biological role, serine/threonine-protein kinase that plays a critical role in initiating innate immune response against foreign pathogens. Involved in Toll-like receptor (TLR) and IL-1R signaling pathways. Is rapidly recruited by MYD88 to the receptor-signaling complex upon TLR activation to form the Myddosome together with IRAK2. Phosphorylates initially IRAK1, thus stimulating the kinase activity and intensive autophosphorylation of IRAK1. Phosphorylates E3 ubiquitin ligases Pellino proteins (PELI1, PELI2 and PELI3) to promote pellino-mediated polyubiquitination of IRAK1. Then, the ubiquitin-binding domain of IKBKG/NEMO binds to polyubiquitinated IRAK1 bringing together the IRAK1-MAP3K7/TAK1-TRAF6 complex and the NEMO-IKKA-IKKB complex. In turn, MAP3K7/TAK1 activates IKKs (CHUK/IKKA and IKBKB/IKKB) leading to NF-kappa-B nuclear translocation and activation. Alternatively, phosphorylates TIRAP to promote its ubiquitination and subsequent degradation. Phosphorylates NCF1 and regulates NADPH oxidase activation after LPS stimulation suggesting a similar mechanism during microbial infections. The chain is Interleukin-1 receptor-associated kinase 4 (IRAK4) from Homo sapiens (Human).